Consider the following 275-residue polypeptide: 3-methyl-2-oxobutanoate hydroxymethyltransferase (275 aa).

Mg(2+)-binding residues include D49 and D88. 3-methyl-2-oxobutanoate contacts are provided by residues 49-50, D88, and K118; that span reads DS. Residue E120 coordinates Mg(2+). E187 serves as the catalytic Proton acceptor.

This sequence belongs to the PanB family. Homodecamer; pentamer of dimers. It depends on Mg(2+) as a cofactor.

Its subcellular location is the cytoplasm. The catalysed reaction is 3-methyl-2-oxobutanoate + (6R)-5,10-methylene-5,6,7,8-tetrahydrofolate + H2O = 2-dehydropantoate + (6S)-5,6,7,8-tetrahydrofolate. The protein operates within cofactor biosynthesis; (R)-pantothenate biosynthesis; (R)-pantoate from 3-methyl-2-oxobutanoate: step 1/2. Catalyzes the reversible reaction in which hydroxymethyl group from 5,10-methylenetetrahydrofolate is transferred onto alpha-ketoisovalerate to form ketopantoate. The sequence is that of 3-methyl-2-oxobutanoate hydroxymethyltransferase from Hyphomonas neptunium (strain ATCC 15444).